The chain runs to 80 residues: MKTGIKKIKLHVKKNDDVVVIAGNDKGKSGKVLKVFPQKGRVIVEGVNIRKRHMRPTQTSPQGSIIEREFPIHASNVKKS.

The protein belongs to the universal ribosomal protein uL24 family. As to quaternary structure, part of the 50S ribosomal subunit.

In terms of biological role, one of two assembly initiator proteins, it binds directly to the 5'-end of the 23S rRNA, where it nucleates assembly of the 50S subunit. Its function is as follows. One of the proteins that surrounds the polypeptide exit tunnel on the outside of the subunit. The chain is Large ribosomal subunit protein uL24 from Chlorobaculum parvum (strain DSM 263 / NCIMB 8327) (Chlorobium vibrioforme subsp. thiosulfatophilum).